Consider the following 209-residue polypeptide: Glycine cleavage system H-like protein gcvH4 (209 aa).

The segment covering asparagine 35 to asparagine 51 has biased composition (low complexity). Residues asparagine 35–leucine 56 are disordered. The 87-residue stretch at phenylalanine 73–lysine 159 folds into the Lipoyl-binding domain.

It belongs to the GcvH family.

The chain is Glycine cleavage system H-like protein gcvH4 (gcvH4) from Dictyostelium discoideum (Social amoeba).